Here is a 518-residue protein sequence, read N- to C-terminus: Beta-secretase 2 (518 aa).

The first 20 residues, 1-20 (MGALARALLLPLLAQWLLRA), serve as a signal peptide directing secretion. A propeptide spanning residues 21 to 62 (APELAPAPFTLPLRVAAATNRVVAPTPGPGTPAERHADGLAL) is cleaved from the precursor. At 21 to 473 (APELAPAPFT…SEPILWIVSY (453 aa)) the chain is on the extracellular side. One can recognise a Peptidase A1 domain in the interval 92–429 (YYLEMLIGTP…DRAQKRVGFA (338 aa)). The active site involves Asp-110. N-linked (GlcNAc...) asparagine glycosylation is present at Asn-170. Disulfide bonds link Cys-233-Cys-433, Cys-292-Cys-457, and Cys-344-Cys-393. Asp-303 is an active-site residue. N-linked (GlcNAc...) asparagine glycosylation occurs at Asn-366. A helical membrane pass occupies residues 474–494 (ALMSVCGAILLVLIVLLLLPF). The Cytoplasmic segment spans residues 495 to 518 (RCQRRPRDPEVVNDESSLVRHRWK).

It belongs to the peptidase A1 family. In terms of assembly, monomer. Interacts with RTN3 and RTN4. Undergoes autoproteolytic cleavage. Post-translationally, glycosylated. Brain. Present in neurons within the hippocampus, frontal cortex and temporal cortex (at protein level). Expressed at low levels in most peripheral tissues and at higher levels in colon, kidney, pancreas, placenta, prostate, stomach and trachea. Expressed at low levels in the brain. Found in spinal cord, medulla oblongata, substantia nigra and locus coruleus. Expressed in the ductal epithelium of both normal and malignant prostate.

It localises to the cell membrane. The protein resides in the golgi apparatus. The protein localises to the endoplasmic reticulum. It is found in the endosome. Its subcellular location is the melanosome. It carries out the reaction Broad endopeptidase specificity. Cleaves Glu-Val-Asn-Leu-|-Asp-Ala-Glu-Phe in the Swedish variant of Alzheimer's amyloid precursor protein.. Responsible for the proteolytic processing of the amyloid precursor protein (APP). Cleaves APP, between residues 690 and 691, leading to the generation and extracellular release of beta-cleaved soluble APP, and a corresponding cell-associated C-terminal fragment which is later released by gamma-secretase. It has also been shown that it can cleave APP between residues 671 and 672. Involved in the proteolytic shedding of PMEL at early stages of melanosome biogenesis. Cleaves PMEL within the M-beta fragment to release the amyloidogenic PMEL luminal fragment containing M-alpha and a small portion of M-beta N-terminus. This is a prerequisite step for subsequent processing and assembly of PMEL fibrils into amyloid sheets. Responsible also for the proteolytic processing of CLTRN in pancreatic beta cells. This chain is Beta-secretase 2 (BACE2), found in Homo sapiens (Human).